Here is a 737-residue protein sequence, read N- to C-terminus: Alpha-adducin (737 aa).

The residue at position 1 (Met1) is an N-acetylmethionine. Residues Met1 to Lys21 are disordered. Ser12 is subject to Phosphoserine. Ser59 is subject to Phosphoserine; by PKA. The residue at position 64 (Ser64) is a Phosphoserine. Thr331 is modified (phosphothreonine). A phosphoserine mark is found at Ser334, Ser353, Ser355, Ser358, and Ser366. Ser408 is subject to Phosphoserine; by PKA. 2 disordered regions span residues Phe421–Pro486 and Arg576–Ser737. A Phosphoserine modification is found at Ser427. A Phosphothreonine modification is found at Thr429. Ser431 is modified (phosphoserine). Ser436 is modified (phosphoserine; by PKA). Thr445 is subject to Phosphothreonine; by ROCK2. Residues Ser464 and Ser465 each carry the phosphoserine modification. Thr480 is subject to Phosphothreonine; by ROCK2. Residue Ser481 is modified to Phosphoserine; by PKA. Basic and acidic residues predominate over residues Arg576 to Pro601. Ser586, Ser600, and Ser613 each carry phosphoserine. Positions Pro602–Thr614 are enriched in pro residues. At Thr614 the chain carries Phosphothreonine. 4 positions are modified to phosphoserine: Ser678, Ser707, Ser710, and Ser714. Positions Pro687–Ser714 are enriched in low complexity. Basic residues predominate over residues Pro715–Ser737. Ser716 is modified (phosphoserine; by PKC). Residues Lys717–Lys734 form an interaction with calmodulin region. Ser726 carries the post-translational modification Phosphoserine; by PKA and PKC.

Belongs to the aldolase class II family. Adducin subfamily. In terms of assembly, heterodimer of an alpha and a beta subunit or an alpha and a gamma subunit. Expressed in all tissues. Found in much higher levels in reticulocytes than the beta subunit.

It localises to the cytoplasm. The protein localises to the cytoskeleton. The protein resides in the cell membrane. Functionally, membrane-cytoskeleton-associated protein that promotes the assembly of the spectrin-actin network. Binds to calmodulin. The polypeptide is Alpha-adducin (ADD1) (Homo sapiens (Human)).